Here is a 359-residue protein sequence, read N- to C-terminus: MDLMSFKEKELSKKDCVELFEDTENFFDILKLADSLRKDIVGDTVTYVVNANINFTNVCSGTCKFCAFKAEHGDPNAFFLSPEQVAKKALEARKTGATEVCIQGGLLKEIDTYFQAEILKKVKEITKTYGGIDVHAFSPMEVKSAAENAGLSVKEALKILKENGLNSMPGTAAEILDDEVRSEICPTKLKTSEWIDVVSTAHKTGINTTCTMMYGHIEENKHLAEHLSILRKIQKETGGFTEFVPLTFLHENAPLHHMDRVKSGASGMLDLKVYAISRIFFKDYIKNIQTSWVKLGTKLSQISLNCGANDIGGTLMEESISKAAGGSYGTYMSEEKLKDMVLAVGRIPKQRNTCYEIIE.

One can recognise a Radical SAM core domain in the interval 45 to 282; that stretch reads VTYVVNANIN…VYAISRIFFK (238 aa). Residues C59, C63, and C66 each coordinate [4Fe-4S] cluster.

Belongs to the radical SAM superfamily. CofH family. Consists of two subunits, CofG and CofH. The cofactor is [4Fe-4S] cluster.

It carries out the reaction 5-amino-6-(D-ribitylamino)uracil + L-tyrosine + S-adenosyl-L-methionine = 5-amino-5-(4-hydroxybenzyl)-6-(D-ribitylimino)-5,6-dihydrouracil + 2-iminoacetate + 5'-deoxyadenosine + L-methionine + H(+). Its pathway is cofactor biosynthesis; coenzyme F0 biosynthesis. In terms of biological role, catalyzes the radical-mediated synthesis of 5-amino-5-(4-hydroxybenzyl)-6-(D-ribitylimino)-5,6-dihydrouracil from 5-amino-6-(D-ribitylamino)uracil and L-tyrosine. The protein is 5-amino-6-(D-ribitylamino)uracil--L-tyrosine 4-hydroxyphenyl transferase 1 of Methanococcus maripaludis (strain DSM 14266 / JCM 13030 / NBRC 101832 / S2 / LL).